The sequence spans 531 residues: Achacin (531 aa).

The signal sequence occupies residues methionine 1–serine 22. The propeptide occupies serine 23–arginine 29. Residues asparagine 112, asparagine 150, asparagine 308, and asparagine 392 are each glycosylated (N-linked (GlcNAc...) asparagine).

The protein to A.kurodai aplysianin-A. As to quaternary structure, homodimer. As to expression, collar tissue.

In terms of biological role, antibacterial glycoprotein. The polypeptide is Achacin (Lissachatina fulica (Giant African land snail)).